A 124-amino-acid polypeptide reads, in one-letter code: Protein CYSTEINE-RICH TRANSMEMBRANE MODULE 10 (124 aa).

The tract at residues 1–103 is disordered; that stretch reads MSYQDPQHPV…PKNKKDKKDS (103 aa). Pro residues-rich tracts occupy residues 27-40 and 65-88; these read AGYPPPAGYPPPQY and GYPPPQYPQGHPPQYPYQGPPPPH. The helical transmembrane segment at 101-118 threads the bilayer; the sequence is KDSGGFMEGCLAMLCCCV.

Belongs to the CYSTM1 family. Heterodimers. Interacts with CYSTM7 and WIH1/CYSTM13. Mostly expressed in stems and,at low levels, in stems, roots, flowers, siliques and leaves.

The protein localises to the cell membrane. It is found in the cytoplasm. Functionally, involved in resistance to abiotic stress. This chain is Protein CYSTEINE-RICH TRANSMEMBRANE MODULE 10, found in Arabidopsis thaliana (Mouse-ear cress).